The chain runs to 537 residues: Cytochrome P450 734A5 (537 aa).

Residues 13–33 (GAAAVAVAAAAAWVAVYAAAA) form a helical membrane-spanning segment. Cys480 is a binding site for heme.

It belongs to the cytochrome P450 family. Heme serves as cofactor. As to expression, exclusively expressed in roots.

It is found in the membrane. Its function is as follows. Cytochrome P450 probably involved in brassinosteroids (BRs) inactivation and regulation of BRs homeostasis. The chain is Cytochrome P450 734A5 (CYP734A5) from Oryza sativa subsp. japonica (Rice).